The chain runs to 123 residues: Histone H2B (123 aa).

The segment at 1 to 30 (MPPKTSGKAAKKAGKAQKNITKTDKKKKRK) is disordered. Proline 2 bears the N-methylproline; partial mark. The residue at position 44 (lysine 44) is an N6-succinyllysine. Serine 110 carries O-linked (GlcNAc) serine glycosylation. 2 positions are modified to N6-succinyllysine: lysine 114 and lysine 118. A Glycyl lysine isopeptide (Lys-Gly) (interchain with G-Cter in ubiquitin) cross-link involves residue lysine 118.

It belongs to the histone H2B family. In terms of assembly, the nucleosome is a histone octamer containing two molecules each of H2A, H2B, H3 and H4 assembled in one H3-H4 heterotetramer and two H2A-H2B heterodimers. The octamer wraps approximately 147 bp of DNA. Post-translationally, phosphorylated by the catalytic component of the Dbf4-dependent kinase (DDK) complex Cdc7. In terms of processing, monoubiquitination of Lys-118 by Bre1 gives a specific tag for epigenetic transcriptional activation and is also prerequisite for histone H3 'Lys-4' and 'Lys-79' methylation. Deubiquitination of Lys-118 by the SAGA complex is involved in activating transcription of a large subset of genes. Methylation at Pro-2 increases upon heat shock. Post-translationally, glcNAcylation at Ser-110 promotes monoubiquitination of Lys-118. It fluctuates in response to extracellular glucose, and associates with transcribed genes.

Its subcellular location is the nucleus. It is found in the chromosome. In terms of biological role, core component of nucleosome. Nucleosomes wrap and compact DNA into chromatin, limiting DNA accessibility to the cellular machineries which require DNA as a template. Histones thereby play a central role in transcription regulation, DNA repair, DNA replication and chromosomal stability. DNA accessibility is regulated via a complex set of post-translational modifications of histones, also called histone code, and nucleosome remodeling. This Drosophila erecta (Fruit fly) protein is Histone H2B (His2B).